A 562-amino-acid chain; its full sequence is MAIIYLILLFTAVRGDQICIGYHANNSTEKVDTNLERNVTVTHAKDILEKTHNGKLCKLNGIPPLELGDCSIAGWLLGNPECDRLLSVPEWSYIMEKENPRDGLCYPGSFNDYEELKHLLSSVKHFEKVKILPKDRWTQHTTTGGSRACAVSGNPSFFRNMVWLTKEGSDYPVAKGSYNNTSGEQMLIIWGVHHPIDETEQRTLYQNVGTYVSVGTSTLNKRSTPEIATRPKVNGQGGRMEFSWTLLDMWDTINFESTGNLIAPEYGFKISKRGSSGIMKTEGTLENCETKCQTPLGAINTTLPFHNVHPLTIGECPKYVKSEKLVLATGLRNVPQIESRGLFGAIAGFIEGGWQGMVDGWYGYHHSNDQGSGYAADKESTQKAFDGITNKVNSVIEKMNTQFEAVGKEFGNLERRLENLNKRMEDGFLDVWTYNAELLVLMENERTLDFHDSNVKNLYDKVRMQLRDNVKELGNGCFEFYHKCDDECMNSVKNGTYDYPKYEEESKLNRNEIKGVKLSSMGVYQILAIYATVAGSLSLAIMMAGISFWMCSNGSLQCRICI.

Positions methionine 1–glycine 15 are cleaved as a signal peptide. The Extracellular portion of the chain corresponds to aspartate 16–glutamine 525. 6 cysteine pairs are disulfide-bonded: cysteine 19/cysteine 477, cysteine 57/cysteine 288, cysteine 70/cysteine 82, cysteine 105/cysteine 149, cysteine 292/cysteine 316, and cysteine 484/cysteine 488. Residues asparagine 25, asparagine 26, and asparagine 38 are each glycosylated (N-linked (GlcNAc...) asparagine; by host). 3 N-linked (GlcNAc...) asparagine; by host glycosylation sites follow: asparagine 179, asparagine 180, and asparagine 300. N-linked (GlcNAc...) asparagine; by host glycosylation is present at asparagine 494. Residues isoleucine 526–isoleucine 546 form a helical membrane-spanning segment. Topologically, residues serine 547–isoleucine 562 are cytoplasmic. S-palmitoyl cysteine; by host attachment occurs at residues cysteine 551, cysteine 558, and cysteine 561.

The protein belongs to the influenza viruses hemagglutinin family. In terms of assembly, homotrimer of disulfide-linked HA1-HA2. Post-translationally, palmitoylated. In natural infection, inactive HA is matured into HA1 and HA2 outside the cell by one or more trypsin-like, arginine-specific endoprotease secreted by the bronchial epithelial cells. One identified protease that may be involved in this process is secreted in lungs by club cells.

Its subcellular location is the virion membrane. It is found in the host apical cell membrane. Functionally, binds to sialic acid-containing receptors on the cell surface, bringing about the attachment of the virus particle to the cell. This attachment induces virion internalization of about two third of the virus particles through clathrin-dependent endocytosis and about one third through a clathrin- and caveolin-independent pathway. Plays a major role in the determination of host range restriction and virulence. Class I viral fusion protein. Responsible for penetration of the virus into the cell cytoplasm by mediating the fusion of the membrane of the endocytosed virus particle with the endosomal membrane. Low pH in endosomes induces an irreversible conformational change in HA2, releasing the fusion hydrophobic peptide. Several trimers are required to form a competent fusion pore. In terms of biological role, binds to sialic acid-containing receptors on the cell surface, bringing about the attachment of the virus particle to the cell. This attachment induces virion internalization either through clathrin-dependent endocytosis or through clathrin- and caveolin-independent pathway. Plays a major role in the determination of host range restriction and virulence. Class I viral fusion protein. Responsible for penetration of the virus into the cell cytoplasm by mediating the fusion of the membrane of the endocytosed virus particle with the endosomal membrane. Low pH in endosomes induces an irreversible conformational change in HA2, releasing the fusion hydrophobic peptide. Several trimers are required to form a competent fusion pore. This chain is Hemagglutinin, found in Influenza A virus (strain A/Japan/305/1957 H2N2).